The sequence spans 69 residues: Conopeptide Y-Pl1 (69 aa).

Residues 1-20 form the signal peptide; it reads MSKLGVVLFVFLLLLPLAAP. The propeptide occupies 21-69; that stretch reads QPVGDQPADQPADRNAEARARFLHPFQYYTLYRYLTRFLHRYPIYYIRY.

Belongs to the conotoxin M superfamily. Conopeptide Y family. In terms of tissue distribution, expressed by the venom duct.

Its subcellular location is the secreted. Functionally, tyrosine-rich conopeptide that targets several channels/receptors that are expressed in Xenopus oocytes. These targets are the voltage-gated potassium channels Kv1.6/KCNA6 (IC(50) is 170 nM) and Kv1.2/KCNA2 (IC(50) is 2.0 uM), Nav1.2/SCN2A (30% of inhibition), and N-methyl-D-aspartate (NMDA) receptor (GRIN1/GRIN2A/GRIN3B and GRIN1/GRIN2B/GRIN3B) (15% of inhibition). In vivo, causes the marine worm N.virens to move very slowly in contrast to control worms, and causes seizures (at 5 nmol) and death (20 nmol) to mice when intracranially injected. This is Conopeptide Y-Pl1 from Conus planorbis (Planorbis cone).